The chain runs to 203 residues: Cutinase pbc1 (203 aa).

A signal peptide spans 1-18; that stretch reads MKVTALGNTLTGFGQALA. Cys-32 and Cys-107 are oxidised to a cystine. The active-site Nucleophile is the Ser-118. A disulfide bond links Cys-166 and Cys-173. His-170 is an active-site residue. His-183 acts as the Proton donor/acceptor in catalysis.

It belongs to the cutinase family. The 2 disulfide bonds play a critical role in holding the catalytic residues in juxta-position; reduction of the disulfide bridges results in the complete inactivation of the enzyme.

It localises to the secreted. It catalyses the reaction cutin + H2O = cutin monomers.. Functionally, catalyzes the hydrolysis of complex carboxylic polyesters found in the cell wall of plants. Degrades cutin, a macromolecule that forms the structure of the plant cuticle. Allows pathogenic fungi to penetrate through the cuticular barrier into the host plant during the initial stage of fungal infection. The chain is Cutinase pbc1 from Pyrenopeziza brassicae.